A 299-amino-acid polypeptide reads, in one-letter code: Probable arylamine N-acetyltransferase 2 (299 aa).

Cys75 acts as the Acyl-thioester intermediate in catalysis. Residues His115 and Asp130 contribute to the active site.

It belongs to the arylamine N-acetyltransferase family.

It carries out the reaction an arylamine + acetyl-CoA = an N-acetylarylamine + CoA. The chain is Probable arylamine N-acetyltransferase 2 from Dictyostelium discoideum (Social amoeba).